Reading from the N-terminus, the 287-residue chain is Urease accessory protein UreD (287 aa).

This sequence belongs to the UreD family. As to quaternary structure, ureD, UreF and UreG form a complex that acts as a GTP-hydrolysis-dependent molecular chaperone, activating the urease apoprotein by helping to assemble the nickel containing metallocenter of UreC. The UreE protein probably delivers the nickel.

The protein resides in the cytoplasm. Its function is as follows. Required for maturation of urease via the functional incorporation of the urease nickel metallocenter. The sequence is that of Urease accessory protein UreD from Aliivibrio fischeri (strain ATCC 700601 / ES114) (Vibrio fischeri).